Consider the following 319-residue polypeptide: MGLTVLALIGGYIVVLGVAAWALDAFTGLSGTGVAFMLSLLALAMVLVQWLFSPYIINMVYRTREPLPGEEWIVAEVEQLARRSGLKPPKVVVSEMNMPNAFAYGSPIAGSYVAVTRGLLRLLPKDEVRAVLAHEVGHLKHRDVTVILALSLIPIAAFLIGRTLVWAGILGGGGGERRGNPMALVAVGAALLAAGMVFQLIVSHFNRLREYYADAHSALVTGSPRSLQRALARIHAAYEHNPHLVEEARSNEMASMLFIVAPLTSLTASPLVDVDYLVERLKEQETNPLVELFSTHPPVSKRLRFLDRLASRIGGIEHY.

2 helical membrane-spanning segments follow: residues 3–23 (LTVL…AWAL) and 32–52 (TGVA…QWLF). Zn(2+) is bound at residue His-134. Glu-135 is an active-site residue. His-138 provides a ligand contact to Zn(2+). 2 helical membrane passes run 146 to 166 (VILA…TLVW) and 182 to 202 (MALV…QLIV). Glu-210 serves as a coordination point for Zn(2+).

It belongs to the peptidase M48B family. Requires Zn(2+) as cofactor.

The protein resides in the cell membrane. The sequence is that of Protease HtpX homolog from Aeropyrum pernix (strain ATCC 700893 / DSM 11879 / JCM 9820 / NBRC 100138 / K1).